A 311-amino-acid polypeptide reads, in one-letter code: Triacylglycerol lipase (311 aa).

The signal sequence occupies residues 1 to 26; sequence MKKKSLLPLGLAIGLASLAASPLIQA. Residues 35–280 enclose the AB hydrolase-1 domain; the sequence is PIVLAHGMLG…DNYRMNHLDE (246 aa). Met-42 contacts substrate. The active-site Nucleophile is the Ser-108. Position 109 (His-109) interacts with substrate. Residues Cys-209 and Cys-261 are joined by a disulfide bond. Asp-235 lines the Ca(2+) pocket. Catalysis depends on charge relay system residues Asp-255 and His-277. Asp-279, Gln-283, and Leu-287 together coordinate Ca(2+).

The protein belongs to the AB hydrolase superfamily. Pseudomonas lipase family. In terms of assembly, monomer. It depends on Ca(2+) as a cofactor.

It localises to the secreted. The catalysed reaction is a triacylglycerol + H2O = a diacylglycerol + a fatty acid + H(+). Na(+) increases lipase activity. Inhibited by diethyl p-nitrophenyl phosphate and 3,4-dichloroisocoumarin (DCI). In terms of biological role, catalyzes the hydrolysis of triacylglycerol. It also exhibits some esterase activity with p-nitrophenyl acetate and Tween 80 as substrates, however the lipase activity is approximately eight times the esterase activity. It shows a marked specificity for the 1,3-oleyl residues of triolein. This chain is Triacylglycerol lipase, found in Pseudomonas aeruginosa (strain ATCC 15692 / DSM 22644 / CIP 104116 / JCM 14847 / LMG 12228 / 1C / PRS 101 / PAO1).